Consider the following 249-residue polypeptide: tRNA(Phe) (4-demethylwyosine(37)-C(7)) aminocarboxypropyltransferase (249 aa).

S-adenosyl-L-methionine is bound by residues Ser-80, Arg-87, Glu-127, and 154 to 155 (DN).

The protein belongs to the class I-like SAM-binding methyltransferase superfamily. TRM5/TYW2 family.

It localises to the cytoplasm. The enzyme catalyses 4-demethylwyosine(37) in tRNA(Phe) + S-adenosyl-L-methionine = 4-demethyl-7-[(3S)-3-amino-3-carboxypropyl]wyosine(37) in tRNA(Phe) + S-methyl-5'-thioadenosine + H(+). Its function is as follows. S-adenosyl-L-methionine-dependent transferase that acts as a component of the wyosine derivatives biosynthesis pathway. Catalyzes the transfer of the alpha-amino-alpha-carboxypropyl (acp) group from S-adenosyl-L-methionine to 4-demethylwyosine (imG-14), forming 7-aminocarboxypropyl-demethylwyosine (wybutosine-86) at position 37 of tRNA(Phe). This Methanocaldococcus jannaschii (strain ATCC 43067 / DSM 2661 / JAL-1 / JCM 10045 / NBRC 100440) (Methanococcus jannaschii) protein is tRNA(Phe) (4-demethylwyosine(37)-C(7)) aminocarboxypropyltransferase.